The primary structure comprises 289 residues: MLRDLFVKKKKYAAIPSEQVRKDVPDGVMTKCPECKKIMYTKELLKNLKVCVNCGYHHPMNAWERLDSILDEGSFREYDKEMVSLNPLEFPGYEEKLESDRKKTELNEAVVTGEGTIDDMLVVVAVMDSRFRMGSMGSVVGEKIARAVEKAYDLQVPFIIFTASGGARMQEGILSLMQMAKTSVALKKHSNAGGLFISVMTHPTTGGVSASFASLGDYNLAEPGALIGFAGRRVIEQTVREKLPEDFQTAEFLLDHGQLDAVVHRDDMRESLRKILEVHQGGGMAVWQS.

A CoA carboxyltransferase N-terminal domain is found at 28-289 (VMTKCPECKK…QGGGMAVWQS (262 aa)). Residues Cys-32, Cys-35, Cys-51, and Cys-54 each coordinate Zn(2+). The C4-type zinc finger occupies 32–54 (CPECKKIMYTKELLKNLKVCVNC).

This sequence belongs to the AccD/PCCB family. In terms of assembly, acetyl-CoA carboxylase is a heterohexamer composed of biotin carboxyl carrier protein (AccB), biotin carboxylase (AccC) and two subunits each of ACCase subunit alpha (AccA) and ACCase subunit beta (AccD). Zn(2+) serves as cofactor.

The protein resides in the cytoplasm. The catalysed reaction is N(6)-carboxybiotinyl-L-lysyl-[protein] + acetyl-CoA = N(6)-biotinyl-L-lysyl-[protein] + malonyl-CoA. It functions in the pathway lipid metabolism; malonyl-CoA biosynthesis; malonyl-CoA from acetyl-CoA: step 1/1. Its function is as follows. Component of the acetyl coenzyme A carboxylase (ACC) complex. Biotin carboxylase (BC) catalyzes the carboxylation of biotin on its carrier protein (BCCP) and then the CO(2) group is transferred by the transcarboxylase to acetyl-CoA to form malonyl-CoA. The chain is Acetyl-coenzyme A carboxylase carboxyl transferase subunit beta from Bacillus cereus (strain G9842).